A 494-amino-acid polypeptide reads, in one-letter code: Endoglucanase 22 (494 aa).

An N-terminal signal peptide occupies residues 1–21 (MKPLVCSFIVILLILLPTTIS). Asp76 serves as the catalytic Nucleophile. The active site involves His413. A glycan (N-linked (GlcNAc...) asparagine) is linked at Asn468. The active site involves Glu473.

This sequence belongs to the glycosyl hydrolase 9 (cellulase E) family.

Its subcellular location is the secreted. It carries out the reaction Endohydrolysis of (1-&gt;4)-beta-D-glucosidic linkages in cellulose, lichenin and cereal beta-D-glucans.. The chain is Endoglucanase 22 (GH9B16) from Arabidopsis thaliana (Mouse-ear cress).